Consider the following 425-residue polypeptide: Monoacylglycerol lipase ABHD2 (425 aa).

The Cytoplasmic portion of the chain corresponds to 1–9 (MNAMMETSE). Residues 10–30 (LPAVFDGVKLAAVAAVLYVIV) traverse the membrane as a helical; Signal-anchor for type II membrane protein segment. Residues 31 to 425 (RCLNLKSPTA…DTELVEADLE (395 aa)) are Extracellular-facing. Residues 128-382 (MVICPGIANH…HGGHLGFFEG (255 aa)) enclose the AB hydrolase-1 domain. Asparagine 136 is a glycosylation site (N-linked (GlcNAc...) asparagine). Serine 207 acts as the Nucleophile in catalysis. Active-site charge relay system residues include aspartate 345 and histidine 376. Asparagine 410 carries an N-linked (GlcNAc...) asparagine glycan.

Belongs to the AB hydrolase superfamily. AB hydrolase 4 family.

The protein localises to the cell membrane. It catalyses the reaction Hydrolyzes glycerol monoesters of long-chain fatty acids.. It carries out the reaction an acetyl ester + H2O = an aliphatic alcohol + acetate + H(+). The catalysed reaction is a triacylglycerol + H2O = a diacylglycerol + a fatty acid + H(+). The enzyme catalyses 2-(5Z,8Z,11Z,14Z-eicosatetraenoyl)-glycerol + H2O = glycerol + (5Z,8Z,11Z,14Z)-eicosatetraenoate + H(+). It catalyses the reaction a butanoate ester + H2O = an aliphatic alcohol + butanoate + H(+). It carries out the reaction hexadecanoate ester + H2O = an aliphatic alcohol + hexadecanoate + H(+). Its activity is regulated as follows. Acylglycerol lipase activity is activated upon binding to progesterone. Functionally, progesterone-dependent acylglycerol lipase that catalyzes hydrolysis of endocannabinoid arachidonoylglycerol (AG) from cell membrane. Acts as a progesterone receptor: progesterone-binding activates the acylglycerol lipase activity, mediating degradation of 1-arachidonoylglycerol (1AG) and 2-arachidonoylglycerol (2AG) to glycerol and arachidonic acid (AA). Also displays an ester hydrolase activity against acetyl ester, butanoate ester and hexadecanoate ester. Plays a key role in sperm capacitation in response to progesterone by mediating degradation of 2AG, an inhibitor of the sperm calcium channel CatSper, leading to calcium influx via CatSper and sperm activation. May also play a role in smooth muscle cells migration. This is Monoacylglycerol lipase ABHD2 (ABHD2) from Bos taurus (Bovine).